The following is a 104-amino-acid chain: Urease subunit beta (104 aa).

Belongs to the urease beta subunit family. As to quaternary structure, heterotrimer of UreA (gamma), UreB (beta) and UreC (alpha) subunits. Three heterotrimers associate to form the active enzyme.

The protein resides in the cytoplasm. It carries out the reaction urea + 2 H2O + H(+) = hydrogencarbonate + 2 NH4(+). The protein operates within nitrogen metabolism; urea degradation; CO(2) and NH(3) from urea (urease route): step 1/1. In Rhodopseudomonas palustris (strain BisB18), this protein is Urease subunit beta.